We begin with the raw amino-acid sequence, 421 residues long: Zinc metalloproteinase-disintegrin-like lachestatin-2 (421 aa).

A Peptidase M12B domain is found at 10–206; that stretch reads KYVKLVLVAD…DMPQCILEKP (197 aa). 3 cysteine pairs are disulfide-bonded: Cys121–Cys201, Cys161–Cys185, and Cys163–Cys168. His146 is a Zn(2+) binding site. The active site involves Glu147. Residues His150 and His156 each contribute to the Zn(2+) site. Positions 214–299 constitute a Disintegrin domain; the sequence is PPVCGNYFVE…AECTDRFQRN (86 aa). Ca(2+)-binding residues include Val216, Asn219, Phe221, Glu223, Glu226, and Asp229. Intrachain disulfides connect Cys217-Cys246, Cys228-Cys241, Cys230-Cys236, Cys240-Cys263, Cys254-Cys260, Cys259-Cys285, Cys272-Cys292, Cys279-Cys310, Cys303-Cys315, Cys322-Cys372, Cys337-Cys383, Cys350-Cys360, Cys367-Cys409, and Cys403-Cys414. The D/ECD-tripeptide motif lies at 278–280; that stretch reads ECD. Ca(2+)-binding residues include Asp280, Met281, Asp283, Asp294, and Arg295. Asn312 is a glycosylation site (N-linked (GlcNAc...) asparagine).

It belongs to the venom metalloproteinase (M12B) family. P-III subfamily. P-IIIc sub-subfamily. As to quaternary structure, homodimer; disulfide-linked. Zn(2+) is required as a cofactor. In terms of tissue distribution, expressed by the venom gland.

The protein resides in the secreted. Functionally, snake venom zinc metalloprotease that induces apoptosis in vascular endothelial cells (VEC), without degrading the extracellular matrix (it cannot cleave collagen) or inhibiting adhesion of VEC. Has also fibrinogenolytic and hemorrhagic activities. This is Zinc metalloproteinase-disintegrin-like lachestatin-2 from Lachesis muta rhombeata (Bushmaster).